The following is a 134-amino-acid chain: Putative thioredoxin 2 (134 aa).

Residues 3–106 (STVELTKENF…LTDVIGQARK (104 aa)) enclose the Thioredoxin domain. Cys-31 and Cys-34 are disulfide-bonded. The disordered stretch occupies residues 115–134 (AVAEQQAQAGQNGQEGQEGQ). Positions 117–134 (AEQQAQAGQNGQEGQEGQ) are enriched in low complexity.

Belongs to the thioredoxin family.

The protein resides in the cytoplasm. Functionally, component of the thioredoxin-thioredoxin reductase system. Participates in various redox reactions through the reversible oxidation of its active center dithiol to a disulfide and catalyzes dithiol-disulfide exchange reactions. The chain is Putative thioredoxin 2 (trxC) from Streptomyces coelicolor (strain ATCC BAA-471 / A3(2) / M145).